The following is a 418-amino-acid chain: Glutamyl-tRNA reductase (418 aa).

Substrate is bound by residues 49-52 (TCNR), S109, 114-116 (EPQ), and Q120. Residue C50 is the Nucleophile of the active site. 189 to 194 (GAGETI) is an NADP(+) binding site.

This sequence belongs to the glutamyl-tRNA reductase family. In terms of assembly, homodimer.

It catalyses the reaction (S)-4-amino-5-oxopentanoate + tRNA(Glu) + NADP(+) = L-glutamyl-tRNA(Glu) + NADPH + H(+). It participates in porphyrin-containing compound metabolism; protoporphyrin-IX biosynthesis; 5-aminolevulinate from L-glutamyl-tRNA(Glu): step 1/2. Catalyzes the NADPH-dependent reduction of glutamyl-tRNA(Glu) to glutamate 1-semialdehyde (GSA). This chain is Glutamyl-tRNA reductase, found in Citrobacter koseri (strain ATCC BAA-895 / CDC 4225-83 / SGSC4696).